A 122-amino-acid polypeptide reads, in one-letter code: Small ribosomal subunit protein uS13 (122 aa).

A disordered region spans residues 99–122 (RGQRTHTNARTRKGPAKAIAGKKK).

This sequence belongs to the universal ribosomal protein uS13 family. Part of the 30S ribosomal subunit. Forms a loose heterodimer with protein S19. Forms two bridges to the 50S subunit in the 70S ribosome.

Located at the top of the head of the 30S subunit, it contacts several helices of the 16S rRNA. In the 70S ribosome it contacts the 23S rRNA (bridge B1a) and protein L5 of the 50S subunit (bridge B1b), connecting the 2 subunits; these bridges are implicated in subunit movement. Contacts the tRNAs in the A and P-sites. In Rhizobium leguminosarum bv. trifolii (strain WSM2304), this protein is Small ribosomal subunit protein uS13.